A 228-amino-acid polypeptide reads, in one-letter code: MIGIIGAMEEEVAILKDKLTDMNEISVAHVKFYRGKLNSKEVVLTQSGIGKVNAAISTTLIIEKFNPKLIINTGSAGALDESLSVGDMLISNDVVYHDVDATAFGYKLGQIPQMPLEFKSDQELLKSVETVINKKNYNAKIGQIVSGDSFIGSVDQRLTIKRQFPEAMAVEMEATAIAQTCHQFHVPFIVTRAVSDLANGKADISFEEFLGEAAKSSSSIVESLIKVL.

Catalysis depends on Glu11, which acts as the Proton acceptor. Substrate-binding positions include Gly77, Ile151, and 172–173 (ME). The active-site Proton donor is the Asp196.

It belongs to the PNP/UDP phosphorylase family. MtnN subfamily.

The catalysed reaction is S-adenosyl-L-homocysteine + H2O = S-(5-deoxy-D-ribos-5-yl)-L-homocysteine + adenine. It catalyses the reaction S-methyl-5'-thioadenosine + H2O = 5-(methylsulfanyl)-D-ribose + adenine. It carries out the reaction 5'-deoxyadenosine + H2O = 5-deoxy-D-ribose + adenine. The protein operates within amino-acid biosynthesis; L-methionine biosynthesis via salvage pathway; S-methyl-5-thio-alpha-D-ribose 1-phosphate from S-methyl-5'-thioadenosine (hydrolase route): step 1/2. Catalyzes the irreversible cleavage of the glycosidic bond in both 5'-methylthioadenosine (MTA) and S-adenosylhomocysteine (SAH/AdoHcy) to adenine and the corresponding thioribose, 5'-methylthioribose and S-ribosylhomocysteine, respectively. Also cleaves 5'-deoxyadenosine, a toxic by-product of radical S-adenosylmethionine (SAM) enzymes, into 5-deoxyribose and adenine. This chain is 5'-methylthioadenosine/S-adenosylhomocysteine nucleosidase, found in Staphylococcus haemolyticus (strain JCSC1435).